The primary structure comprises 189 residues: Protein Rex (189 aa).

Over residues 1–16 the composition is skewed to basic residues; that stretch reads MPKTRRRPRRSQRKRP. Residues 1–27 are disordered; it reads MPKTRRRPRRSQRKRPPTPWPTSQGLD. A Nuclear localization signal, and RNA-binding (RxRE) motif is present at residues 2 to 18; sequence PKTRRRPRRSQRKRPPT. The homomultimerization stretch occupies residues 56-70; it reads RPAYIVTPYWPPVQS. S70 carries the phosphoserine; by host modification. Positions 82–93 match the Nuclear export signal motif; sequence LSAQLYSSLSLD. The disordered stretch occupies residues 87–189; sequence YSSLSLDSPP…PPSPGPSCPM (103 aa). A compositionally biased stretch (low complexity) spans 105 to 114; that stretch reads PLRSLPRQSL. The homomultimerization stretch occupies residues 123–131; that stretch reads PSSRPCANT. Residues 143 to 164 show a composition bias toward polar residues; the sequence is LGSTSQPCLFQTPDSGPKTCTP. Phosphothreonine; by host is present on T174. S177 carries the phosphoserine; by host modification. Residues 178-189 show a composition bias toward pro residues; that stretch reads FPPPSPGPSCPM.

Belongs to the deltaretrovirus Rex protein family. As to quaternary structure, homomultimer. Multimeric assembly is essential for activity and involves XPO1. Binds to human XPO1 and KPNB1. Interacts (via N-terminal nuclear localization signal) with human NPM1. Phosphorylated.

The protein resides in the host nucleus. The protein localises to the host nucleolus. It is found in the host cytoplasm. In terms of biological role, rex escorts unspliced gag-pro-pol and singly spliced env mRNAs out of the nucleus of infected cells. These mRNAs carry a recognition sequence called Rex responsive element (RxRE or XRE) located at the 3' region of the long terminal repeat (LTR). This function is essential since most HTLV proteins are translated from unspliced or partially spliced pre-mRNAs that cannot exit the nucleus by the pathway used by fully processed cellular mRNAs. Rex itself is translated from a fully spliced mRNA that probably readily exits the nucleus. Rex's nuclear localization signal (NLS) binds directly to KPNB1/importin beta-1 without previous binding to KPNA1/importin alpha-1. KPNB1 binds to the GDP bound form of RAN (Ran-GDP) and targets Rex to the nucleus. In the nucleus, the conversion from Ran-GDP to Ran-GTP dissociates Rex from KPNB1 and allows Rex's binding to the RRE in viral pre-mRNAs. Rex multimerizes on the RRE via cooperative assembly. This multimerization is critical for its full biological activity, since it may shield the viral RNA from being spliced or down-regulated, and probably exposes Rex's nuclear export signal (NES) to the surface. Rex can then form a complex with XPO1/CRM1, RANBP3 and Ran-GTP, leading to nuclear export of the complex. Conversion from Ran-GTP to Ran-GDP mediates dissociation of the Rex/RRE/XPO1/RANBP3/RAN complex, so that Rex can return to the nucleus for a subsequent round of export. This Human T-cell leukemia virus 1 (isolate Caribbea HS-35 subtype A) (HTLV-1) protein is Protein Rex.